The primary structure comprises 513 residues: ATP synthase subunit alpha (513 aa).

169-176 provides a ligand contact to ATP; that stretch reads GDRQTGKS.

The protein belongs to the ATPase alpha/beta chains family. As to quaternary structure, F-type ATPases have 2 components, CF(1) - the catalytic core - and CF(0) - the membrane proton channel. CF(1) has five subunits: alpha(3), beta(3), gamma(1), delta(1), epsilon(1). CF(0) has three main subunits: a(1), b(2) and c(9-12). The alpha and beta chains form an alternating ring which encloses part of the gamma chain. CF(1) is attached to CF(0) by a central stalk formed by the gamma and epsilon chains, while a peripheral stalk is formed by the delta and b chains.

Its subcellular location is the cell membrane. The enzyme catalyses ATP + H2O + 4 H(+)(in) = ADP + phosphate + 5 H(+)(out). Its function is as follows. Produces ATP from ADP in the presence of a proton gradient across the membrane. The alpha chain is a regulatory subunit. This chain is ATP synthase subunit alpha, found in Baumannia cicadellinicola subsp. Homalodisca coagulata.